A 308-amino-acid polypeptide reads, in one-letter code: N-acetylneuraminate lyase (308 aa).

2 residues coordinate aceneuramate: Thr50 and Thr51. Tyr142 (proton donor) is an active-site residue. Lys172 (schiff-base intermediate with substrate) is an active-site residue. Aceneuramate-binding residues include Ser174, Gly198, Asp200, Glu201, and Ser217.

This sequence belongs to the DapA family. NanA subfamily. Homotetramer.

It is found in the cytoplasm. The catalysed reaction is aceneuramate = aldehydo-N-acetyl-D-mannosamine + pyruvate. The protein operates within amino-sugar metabolism; N-acetylneuraminate degradation. In terms of biological role, catalyzes the cleavage of N-acetylneuraminic acid (sialic acid) to form pyruvate and N-acetylmannosamine via a Schiff base intermediate. It prevents sialic acids from being recycled and returning to the cell surface. Involved in the N-glycolylneuraminic acid (Neu5Gc) degradation pathway. The protein is N-acetylneuraminate lyase of Gallus gallus (Chicken).